The following is a 1516-amino-acid chain: UDP-glucose:glycoprotein glucosyltransferase 2 (1516 aa).

A signal peptide spans 1 to 27; it reads MAPAKATNVVRLLLGSTALWLSQLGSG. Asn-256, Asn-286, Asn-920, and Asn-950 each carry an N-linked (GlcNAc...) asparagine glycan. The segment at 1220 to 1516 is glucosyltransferase; sequence LHKENKKEKD…QDTILTHDEL (297 aa). Residue Tyr-1289 is modified to Phosphotyrosine. Residues 1513–1516 carry the Prevents secretion from ER motif; that stretch reads HDEL.

This sequence belongs to the glycosyltransferase 8 family. In terms of assembly, interacts with METTL23. Interacts with SELENOF. The cofactor is Ca(2+). Requires Mn(2+) as cofactor. Higher levels in kidney, pancreas, heart, and skeletal muscle.

It localises to the endoplasmic reticulum lumen. The protein localises to the endoplasmic reticulum-Golgi intermediate compartment. It catalyses the reaction N(4)-(alpha-D-Man-(1-&gt;2)-alpha-D-Man-(1-&gt;2)-alpha-D-Man-(1-&gt;3)-[alpha-D-Man-(1-&gt;2)-alpha-D-Man-(1-&gt;3)-[alpha-D-Man-(1-&gt;2)-alpha-D-Man-(1-&gt;6)]-alpha-D-Man-(1-&gt;6)]-beta-D-Man-(1-&gt;4)-beta-D-GlcNAc-(1-&gt;4)-beta-D-GlcNAc)-L-asparaginyl-[protein] (N-glucan mannose isomer 9A1,2,3B1,2,3) + UDP-alpha-D-glucose = N(4)-(alpha-D-Glc-(1-&gt;3)-alpha-D-Man-(1-&gt;2)-alpha-D-Man-(1-&gt;2)-alpha-D-Man-(1-&gt;3)-[alpha-D-Man-(1-&gt;2)-alpha-D-Man-(1-&gt;3)-[alpha-D-Man-(1-&gt;2)-alpha-D-Man-(1-&gt;6)]-alpha-D-Man-(1-&gt;6)]-beta-D-Man-(1-&gt;4)-beta-D-GlcNAc-(1-&gt;4)-beta-D-GlcNAc)-L-asparaginyl-[protein] + UDP + H(+). It functions in the pathway protein modification; protein glycosylation. With respect to regulation, ethylenediaminetetraacetic acid completely abolishes catalytic activity. Catalytic activity is enhanced by complex formation with SELENOF. Its function is as follows. Recognizes glycoproteins with minor folding defects. Reglucosylates single N-glycans near the misfolded part of the protein, thus providing quality control for protein folding in the endoplasmic reticulum. Reglucosylated proteins are recognized by calreticulin for recycling to the endoplasmic reticulum and refolding or degradation. The sequence is that of UDP-glucose:glycoprotein glucosyltransferase 2 (UGGT2) from Homo sapiens (Human).